Here is a 921-residue protein sequence, read N- to C-terminus: Probable serine/threonine-protein kinase DDB_G0275165 (921 aa).

The Protein kinase domain occupies 23–277 (FDPLSIIGSG…SNILGLLEYI (255 aa)). ATP is bound by residues 29-37 (IGSGGFGKV) and Lys-50. The Proton acceptor role is filled by Asp-147. Disordered regions lie at residues 289 to 453 (DYEP…SFPR), 465 to 492 (RGEE…NEED), 530 to 571 (RPWN…SDSN), 583 to 653 (NPTP…PTTI), 671 to 698 (STAT…SNNN), 737 to 813 (IQPL…SRSL), 833 to 858 (SSQQ…TSQF), and 877 to 921 (FEKS…KPKK). 3 stretches are compositionally biased toward low complexity: residues 310–352 (NNNN…NNNN), 400–412 (SNIN…NNSN), and 429–445 (NING…NNNN). Composition is skewed to low complexity over residues 539–550 (NNNNKNNNNNEK) and 583–638 (NPTP…SLSS). The segment covering 643 to 653 (PQSTYKVPTTI) has biased composition (polar residues). 3 stretches are compositionally biased toward low complexity: residues 748 to 775 (TVAA…PTST), 842 to 857 (QPSS…PTSQ), and 892 to 910 (TSSS…PSSP).

This sequence belongs to the protein kinase superfamily. TKL Ser/Thr protein kinase family.

It catalyses the reaction L-seryl-[protein] + ATP = O-phospho-L-seryl-[protein] + ADP + H(+). It carries out the reaction L-threonyl-[protein] + ATP = O-phospho-L-threonyl-[protein] + ADP + H(+). The protein is Probable serine/threonine-protein kinase DDB_G0275165 of Dictyostelium discoideum (Social amoeba).